The chain runs to 310 residues: Methionyl-tRNA formyltransferase (310 aa).

Residue Ser109 to Pro112 coordinates (6S)-5,6,7,8-tetrahydrofolate.

It belongs to the Fmt family.

It carries out the reaction L-methionyl-tRNA(fMet) + (6R)-10-formyltetrahydrofolate = N-formyl-L-methionyl-tRNA(fMet) + (6S)-5,6,7,8-tetrahydrofolate + H(+). Its function is as follows. Attaches a formyl group to the free amino group of methionyl-tRNA(fMet). The formyl group appears to play a dual role in the initiator identity of N-formylmethionyl-tRNA by promoting its recognition by IF2 and preventing the misappropriation of this tRNA by the elongation apparatus. This chain is Methionyl-tRNA formyltransferase, found in Staphylococcus epidermidis (strain ATCC 35984 / DSM 28319 / BCRC 17069 / CCUG 31568 / BM 3577 / RP62A).